Reading from the N-terminus, the 429-residue chain is MQRSHELFERARQHIVGGVNSPVRAFTGVGGEPPFIARAEGPYLYDEDGNRYVDYVCSWGPMVAGHAHPKVVRAVQAAAADGLSFGAPTEVEIRMAEKLKAMLPSLERVRMVNSGTEATMSALRLARGHTGREKIIKFRGCYHGHVDALLVQAGSGALTLGIPGSPGVPAAVVEQTITLPYNDAEAVRECFQRMGDEIAAVIVEPVAGNMNCVPPVPGFLEALRECCDDHGSVLIFDEVMTGFRVGVQCAQGRYGITPDLTCLGKVIGGGMPVGAFGGKAQIMADLAPEGPVYQAGTLSGNPVAMAAGLATLALVDDPATHRALEEATATLVDGLRERAEAAGVSVSLNQAGSMFGLFFTDQNPVTTFEQVQACDLEAFKVFFHAMLEEGVYMAPSAFEAGFLSTAHDTPAIEYTLAAAERAFARVARR.

K265 carries the post-translational modification N6-(pyridoxal phosphate)lysine.

The protein belongs to the class-III pyridoxal-phosphate-dependent aminotransferase family. HemL subfamily. As to quaternary structure, homodimer. The cofactor is pyridoxal 5'-phosphate.

It localises to the cytoplasm. It catalyses the reaction (S)-4-amino-5-oxopentanoate = 5-aminolevulinate. It functions in the pathway porphyrin-containing compound metabolism; protoporphyrin-IX biosynthesis; 5-aminolevulinate from L-glutamyl-tRNA(Glu): step 2/2. In Alkalilimnicola ehrlichii (strain ATCC BAA-1101 / DSM 17681 / MLHE-1), this protein is Glutamate-1-semialdehyde 2,1-aminomutase.